The primary structure comprises 372 residues: Hydrogenase-1 small chain (372 aa).

Positions 1-45 form a signal peptide, tat-type signal; that stretch reads MNNEETFYQAMRRQGVTRRSFLKYCSLAATSLGLGAGMAPKIAWA. Over 46 to 326 the chain is Periplasmic; that stretch reads LENKPRIPVV…QMGTHSTADT (281 aa). Cysteine 62, cysteine 65, cysteine 160, cysteine 194, histidine 232, cysteine 235, cysteine 260, and cysteine 266 together coordinate [4Fe-4S] cluster. Positions 275, 294, and 297 each coordinate [3Fe-4S] cluster. A helical membrane pass occupies residues 327-347; it reads VGLTALGVVAAAVGVHAVASA. A disordered region spans residues 347–372; the sequence is AVDQRRRHNQQPTETEHQPGNEDKQA. Topologically, residues 348–372 are cytoplasmic; it reads VDQRRRHNQQPTETEHQPGNEDKQA. The segment covering 360 to 372 has biased composition (basic and acidic residues); the sequence is ETEHQPGNEDKQA.

It belongs to the [NiFe]/[NiFeSe] hydrogenase small subunit family. Heterodimer of a large and a small subunit. [4Fe-4S] cluster is required as a cofactor. It depends on [3Fe-4S] cluster as a cofactor. Predicted to be exported by the Tat system. The position of the signal peptide cleavage has not been experimentally proven.

The protein resides in the cell inner membrane. The enzyme catalyses H2 + A = AH2. In terms of biological role, this is one of three E.coli hydrogenases synthesized in response to different physiological conditions. HYD1 is believed to have a role in hydrogen cycling during fermentative growth. The sequence is that of Hydrogenase-1 small chain (hyaA) from Escherichia coli O6:H1 (strain CFT073 / ATCC 700928 / UPEC).